We begin with the raw amino-acid sequence, 416 residues long: Phosphoglycerate kinase (416 aa).

14 residues coordinate (2R)-3-phosphoglycerate: Val-23, Asp-24, Phe-25, Asn-26, Gln-38, Arg-39, Ser-62, His-63, Gly-65, Arg-66, Leu-121, Arg-122, His-168, and Arg-169. Gly-212 serves as a coordination point for ADP. Gly-212 provides a ligand contact to CDP. Residues Ala-213 and Lys-214 each contribute to the AMP site. Ala-213 serves as a coordination point for ATP. Ala-213 provides a ligand contact to Mg(2+). Mg(2+) is bound by residues Ala-216 and Asp-217. Asp-217 provides a ligand contact to CDP. Lys-218 serves as a coordination point for AMP. An ATP-binding site is contributed by Lys-218. Gly-236 is an ADP binding site. Gly-236 contributes to the CDP binding site. 2 residues coordinate AMP: Gly-237 and Gly-311. Positions 237 and 311 each coordinate ATP. CDP is bound by residues Gly-336 and Phe-341. Residue Phe-341 coordinates ADP. Position 342 (Glu-342) interacts with AMP. Positions 342, 373, and 374 each coordinate ATP. Asp-373 contributes to the Mg(2+) binding site.

It belongs to the phosphoglycerate kinase family. In terms of assembly, monomer. Requires Mg(2+) as cofactor.

It is found in the cytoplasm. The protein resides in the mitochondrion. It carries out the reaction (2R)-3-phosphoglycerate + ATP = (2R)-3-phospho-glyceroyl phosphate + ADP. Its pathway is carbohydrate degradation; glycolysis; pyruvate from D-glyceraldehyde 3-phosphate: step 2/5. In terms of biological role, catalyzes one of the two ATP producing reactions in the glycolytic pathway via the reversible conversion of 1,3-diphosphoglycerate to 3-phosphoglycerate. Both L- and D- forms of purine and pyrimidine nucleotides can be used as substrates, but the activity is much lower on pyrimidines. Negatively regulates the biosynthesis of acetyl-CoA from pyruvate in the mitochondrion. The polypeptide is Phosphoglycerate kinase (PGK1) (Eremothecium gossypii (strain ATCC 10895 / CBS 109.51 / FGSC 9923 / NRRL Y-1056) (Yeast)).